The sequence spans 67 residues: Major cold shock protein (67 aa).

The CSD domain maps to 4–63 (GTVKWFNAEKGFGFISTENGQDVFAHFSAIQTNGFKTLEEGQKVAFDVEEGQRGPQAVNI).

As to quaternary structure, homodimer.

It is found in the cytoplasm. The sequence is that of Major cold shock protein (cspA) from Streptococcus pyogenes serotype M3 (strain ATCC BAA-595 / MGAS315).